Consider the following 390-residue polypeptide: Chorismate synthase (390 aa).

Residues R40 and R46 each coordinate NADP(+). FMN contacts are provided by residues 128 to 130 (RAS), 251 to 252 (QA), G296, 311 to 315 (KPIPT), and R339.

This sequence belongs to the chorismate synthase family. As to quaternary structure, homotetramer. FMNH2 serves as cofactor.

It carries out the reaction 5-O-(1-carboxyvinyl)-3-phosphoshikimate = chorismate + phosphate. It participates in metabolic intermediate biosynthesis; chorismate biosynthesis; chorismate from D-erythrose 4-phosphate and phosphoenolpyruvate: step 7/7. Its function is as follows. Catalyzes the anti-1,4-elimination of the C-3 phosphate and the C-6 proR hydrogen from 5-enolpyruvylshikimate-3-phosphate (EPSP) to yield chorismate, which is the branch point compound that serves as the starting substrate for the three terminal pathways of aromatic amino acid biosynthesis. This reaction introduces a second double bond into the aromatic ring system. This is Chorismate synthase from Sulfurihydrogenibium sp. (strain YO3AOP1).